The sequence spans 118 residues: Small ribosomal subunit protein uS13 (118 aa).

Positions 91–118 (HRRGLPVRGQRTKTNARTRKGPRKPIKK) are disordered.

This sequence belongs to the universal ribosomal protein uS13 family. As to quaternary structure, part of the 30S ribosomal subunit. Forms a loose heterodimer with protein S19. Forms two bridges to the 50S subunit in the 70S ribosome.

Located at the top of the head of the 30S subunit, it contacts several helices of the 16S rRNA. In the 70S ribosome it contacts the 23S rRNA (bridge B1a) and protein L5 of the 50S subunit (bridge B1b), connecting the 2 subunits; these bridges are implicated in subunit movement. Contacts the tRNAs in the A and P-sites. The chain is Small ribosomal subunit protein uS13 from Hamiltonella defensa subsp. Acyrthosiphon pisum (strain 5AT).